Here is a 618-residue protein sequence, read N- to C-terminus: tRNA 5-methylaminomethyl-2-thiouridine biosynthesis bifunctional protein MnmC (618 aa).

The interval 1–231 is tRNA (mnm(5)s(2)U34)-methyltransferase; it reads MLQTYAPIDF…KRHMLSAVYE (231 aa). The FAD-dependent cmnm(5)s(2)U34 oxidoreductase stretch occupies residues 256-618; sequence IGAGIAGATT…KDIIRGHLNN (363 aa).

This sequence in the N-terminal section; belongs to the methyltransferase superfamily. tRNA (mnm(5)s(2)U34)-methyltransferase family. It in the C-terminal section; belongs to the DAO family. FAD is required as a cofactor.

It is found in the cytoplasm. The catalysed reaction is 5-aminomethyl-2-thiouridine(34) in tRNA + S-adenosyl-L-methionine = 5-methylaminomethyl-2-thiouridine(34) in tRNA + S-adenosyl-L-homocysteine + H(+). In terms of biological role, catalyzes the last two steps in the biosynthesis of 5-methylaminomethyl-2-thiouridine (mnm(5)s(2)U) at the wobble position (U34) in tRNA. Catalyzes the FAD-dependent demodification of cmnm(5)s(2)U34 to nm(5)s(2)U34, followed by the transfer of a methyl group from S-adenosyl-L-methionine to nm(5)s(2)U34, to form mnm(5)s(2)U34. This chain is tRNA 5-methylaminomethyl-2-thiouridine biosynthesis bifunctional protein MnmC, found in Dichelobacter nodosus (strain VCS1703A).